The primary structure comprises 204 residues: CASP-like protein 1B2 (204 aa).

At 1-28 (MASKGEEKPELVGSKQGIVSVTKAKHDQ) the chain is on the cytoplasmic side. The chain crosses the membrane as a helical span at residues 29–49 (IVLVLRVVAFLATASATIVMG). The Extracellular portion of the chain corresponds to 50–80 (LNQETKTLLVGTIGTTPIRATLKAKFQHTPA). A helical membrane pass occupies residues 81 to 101 (FVFFVVANGLASVYNLVMLGV). The Cytoplasmic segment spans residues 102–114 (DVFGRKLDCKGLR). A helical membrane pass occupies residues 115–135 (LVIISILDMVIVAVVAAGASS). The Extracellular portion of the chain corresponds to 136-168 (AAFMAELGKNGNSHAKWNKICDKFESFCHQGGG). The chain crosses the membrane as a helical span at residues 169–189 (ALIPSFIALLLLFLISAISII). The Cytoplasmic portion of the chain corresponds to 190–204 (TLHNQKLTSPHATTP).

Belongs to the Casparian strip membrane proteins (CASP) family. As to quaternary structure, homodimer and heterodimers.

The protein resides in the cell membrane. The chain is CASP-like protein 1B2 from Vitis vinifera (Grape).